Consider the following 162-residue polypeptide: Protein-export protein SecB (162 aa).

The protein belongs to the SecB family. Homotetramer, a dimer of dimers. One homotetramer interacts with 1 SecA dimer.

The protein localises to the cytoplasm. Functionally, one of the proteins required for the normal export of preproteins out of the cell cytoplasm. It is a molecular chaperone that binds to a subset of precursor proteins, maintaining them in a translocation-competent state. It also specifically binds to its receptor SecA. The chain is Protein-export protein SecB from Legionella pneumophila subsp. pneumophila (strain Philadelphia 1 / ATCC 33152 / DSM 7513).